Here is a 227-residue protein sequence, read N- to C-terminus: UPF0758 protein Pcar_0065 (227 aa).

Residues 105–227 enclose the MPN domain; the sequence is RYTSPQAVFA…YVSLADRGVL (123 aa). 3 residues coordinate Zn(2+): His-176, His-178, and Asp-189. A JAMM motif motif is present at residues 176 to 189; the sequence is HNHPSGDPSPSRED.

It belongs to the UPF0758 family.

The sequence is that of UPF0758 protein Pcar_0065 from Syntrophotalea carbinolica (strain DSM 2380 / NBRC 103641 / GraBd1) (Pelobacter carbinolicus).